We begin with the raw amino-acid sequence, 1166 residues long: ATP-dependent helicase/deoxyribonuclease subunit B (1166 aa).

The region spanning 1-278 (MGAEFLVGRS…LNLDITYKEL (278 aa)) is the UvrD-like helicase ATP-binding domain. Residues Ser-10, Gly-11, Lys-14, Thr-15, Lys-16, Thr-236, and Arg-283 each coordinate ATP. In terms of domain architecture, UvrD-like helicase C-terminal spans 281–586 (TERHTKTPEL…TFSLIPPALD (306 aa)). [4Fe-4S] cluster contacts are provided by Cys-801, Cys-1121, Cys-1124, and Cys-1130.

It belongs to the helicase family. AddB/RexB type 1 subfamily. In terms of assembly, heterodimer of AddA and AddB. At low magnesium concentrations there is no nuclease activity, but helicase activity is unaffected. serves as cofactor. It depends on Mg(2+) as a cofactor. [4Fe-4S] cluster is required as a cofactor.

Functionally, the heterodimer acts both as a highly processive, ATP-dependent DNA helicase and as an ATP-dependent single-stranded exonuclease, acting in both directions. Recognizes the B.subtilis Chi site (5'-AGCGG-3') which transforms the enzyme from a helicase which degrades both DNA strands to one with only 5' to 3' exonuclease activity. This generates a double-stranded DNA with a protruding 3'-terminated single-stranded tail suitable for the initiation of homologous recombination (Chi fragment). The AddB nuclease domain is not required for Chi fragment generation but for recognition of the Chi site; this subunit has 5' -&gt; 3' nuclease activity but no helicase activity. The helicase activity of isolated AddA acts on 3'-tailed substrate and requires AddB to bind to blunt-ended DNA. RecA thread formation during DNA double-strand break repair requires RecJ or AddAB. The polypeptide is ATP-dependent helicase/deoxyribonuclease subunit B (Bacillus subtilis (strain 168)).